The following is a 674-amino-acid chain: Pannexin-2 (674 aa).

Residues 11–53 (MATALLAGEKLRELILPGSQDDKAGALAALLLQLKLELPFDRV) lie on the Cytoplasmic side of the membrane. A helical membrane pass occupies residues 54–74 (VTIGTVLVPILLVTLVFTKNF). At 75–125 (AEEPIYCYTPHNFTRDQALYARGYCWTELRDALPGVDASLWPSLFEHKFLP) the chain is on the extracellular side. An N-linked (GlcNAc...) asparagine glycan is attached at Asn86. The helical transmembrane segment at 126–146 (YALLAFAAIMYVPALGWEFLA) threads the bilayer. Residues 147–230 (STRLTSELNF…NFLAKLYLAR (84 aa)) are Cytoplasmic-facing. The chain crosses the membrane as a helical span at residues 231-251 (HVLILLLSVVPISYLCTYYAT). Residues 252–295 (QKQNEFTCALGASPDGPVGSAGPTVRVSCKLPSVQLQRIIAGVD) lie on the Extracellular side of the membrane. A helical transmembrane segment spans residues 296 to 316 (IVLLCFMNLIILVNLIHLFIF). Residues 317-674 (RKSNFIFDKL…PRTVVSTVEF (358 aa)) lie on the Cytoplasmic side of the membrane. The segment covering 394 to 408 (TTPTVRDSGIQTVDP) has biased composition (polar residues). Disordered stretches follow at residues 394–426 (TTPT…VVKR) and 485–510 (AHHY…KKHT). A phosphoserine mark is found at Ser590 and Ser601.

It belongs to the pannexin family. In terms of assembly, forms PANX1/PANX2-heteromeric intercellular channels on coexpression in paired Xenopus oocytes. Does not form homomeric channels. In terms of processing, S-palmitoylated in neural stem and progenitor cells. Cleaved by CASP3 and CASP7 during apoptosis. Cleavage has no effect on it function. Expressed in the eye, thyroid, prostate, kidney and liver. Abundantly expressed in the CNS, including hippocampus, olfactory bulb, cortex, cerebellum. Not detected in the white matter.

Its subcellular location is the cell membrane. The protein resides in the golgi apparatus membrane. The protein localises to the endoplasmic reticulum membrane. Functionally, structural component of the gap junctions and the hemichannels. This chain is Pannexin-2 (Panx2), found in Rattus norvegicus (Rat).